The primary structure comprises 498 residues: ATP synthase subunit beta, chloroplastic (498 aa).

Thr6 is modified (phosphothreonine). Phosphoserine is present on Ser13. 172 to 179 lines the ATP pocket; sequence GGAGVGKT.

It belongs to the ATPase alpha/beta chains family. F-type ATPases have 2 components, CF(1) - the catalytic core - and CF(0) - the membrane proton channel. CF(1) has five subunits: alpha(3), beta(3), gamma(1), delta(1), epsilon(1). CF(0) has four main subunits: a(1), b(1), b'(1) and c(9-12).

It localises to the plastid. The protein localises to the chloroplast thylakoid membrane. It catalyses the reaction ATP + H2O + 4 H(+)(in) = ADP + phosphate + 5 H(+)(out). Its function is as follows. Produces ATP from ADP in the presence of a proton gradient across the membrane. The catalytic sites are hosted primarily by the beta subunits. The sequence is that of ATP synthase subunit beta, chloroplastic from Nasturtium officinale (Watercress).